A 135-amino-acid polypeptide reads, in one-letter code: UPF0355 protein SACOL0457 (135 aa).

It belongs to the UPF0355 family.

The chain is UPF0355 protein SACOL0457 from Staphylococcus aureus (strain COL).